The primary structure comprises 231 residues: MKIGIIAAMEEELVLLVNKLDEPKTENFGQFTYHTGRINGVEVALFLCGIGKVNAAVGATLLLDKFKPDYLINTGVAGAFPGNINIGDIVVSSEVRHYDADATAFDYEMGQIPQMPAAYQADKLLLGLAKKAWINEDSISVHQGPVLSGDSFIHTPQQISQIEQKFPDVMAVEMEGAAIAQTGFLFNVPFILIRSISDKVHEDGSSAIYEQSMEKAAANSVRMVLSMLKEL.

Residue E12 is the Proton acceptor of the active site. Substrate contacts are provided by residues G78, I153, and 174–175 (ME). D198 serves as the catalytic Proton donor.

It belongs to the PNP/UDP phosphorylase family. MtnN subfamily.

The catalysed reaction is S-adenosyl-L-homocysteine + H2O = S-(5-deoxy-D-ribos-5-yl)-L-homocysteine + adenine. The enzyme catalyses S-methyl-5'-thioadenosine + H2O = 5-(methylsulfanyl)-D-ribose + adenine. It catalyses the reaction 5'-deoxyadenosine + H2O = 5-deoxy-D-ribose + adenine. The protein operates within amino-acid biosynthesis; L-methionine biosynthesis via salvage pathway; S-methyl-5-thio-alpha-D-ribose 1-phosphate from S-methyl-5'-thioadenosine (hydrolase route): step 1/2. Functionally, catalyzes the irreversible cleavage of the glycosidic bond in both 5'-methylthioadenosine (MTA) and S-adenosylhomocysteine (SAH/AdoHcy) to adenine and the corresponding thioribose, 5'-methylthioribose and S-ribosylhomocysteine, respectively. Also cleaves 5'-deoxyadenosine, a toxic by-product of radical S-adenosylmethionine (SAM) enzymes, into 5-deoxyribose and adenine. The sequence is that of 5'-methylthioadenosine/S-adenosylhomocysteine nucleosidase from Maridesulfovibrio salexigens (strain ATCC 14822 / DSM 2638 / NCIMB 8403 / VKM B-1763) (Desulfovibrio salexigens).